The chain runs to 97 residues: MRYTTSFIVFCFYIFLFTNLVQGGLVRICNHRIEGYGTCGPNGRKICLDAFWKNQPSPGLSKNLEGCQCEDRRKRPQFKGLSHSCSCCWSYQGNSDE.

The first 23 residues, 1 to 23 (MRYTTSFIVFCFYIFLFTNLVQG), serve as a signal peptide directing secretion. Intrachain disulfides connect Cys29/Cys88, Cys39/Cys69, Cys47/Cys85, and Cys67/Cys87.

Belongs to the DEFL family.

The protein localises to the secreted. This Arabidopsis thaliana (Mouse-ear cress) protein is Putative defensin-like protein 240 (SCRL18).